The chain runs to 379 residues: Cytochrome b (379 aa).

4 helical membrane passes run 33 to 53 (FGSL…FLAM), 77 to 98 (WILR…YIHV), 113 to 133 (WNIG…GYVL), and 178 to 198 (FFAF…VHLL). Heme b is bound by residues H83 and H97. Heme b contacts are provided by H182 and H196. Residue H201 participates in a ubiquinone binding. Transmembrane regions (helical) follow at residues 226–246 (IKDI…VLFS), 288–308 (LGGV…PVLH), 320–340 (LSQC…WIGG), and 347–367 (YVIX…XXXX).

It belongs to the cytochrome b family. The cytochrome bc1 complex contains 11 subunits: 3 respiratory subunits (MT-CYB, CYC1 and UQCRFS1), 2 core proteins (UQCRC1 and UQCRC2) and 6 low-molecular weight proteins (UQCRH/QCR6, UQCRB/QCR7, UQCRQ/QCR8, UQCR10/QCR9, UQCR11/QCR10 and a cleavage product of UQCRFS1). This cytochrome bc1 complex then forms a dimer. Requires heme b as cofactor.

Its subcellular location is the mitochondrion inner membrane. Functionally, component of the ubiquinol-cytochrome c reductase complex (complex III or cytochrome b-c1 complex) that is part of the mitochondrial respiratory chain. The b-c1 complex mediates electron transfer from ubiquinol to cytochrome c. Contributes to the generation of a proton gradient across the mitochondrial membrane that is then used for ATP synthesis. The protein is Cytochrome b (MT-CYB) of Myotis goudotii (Malagasy mouse-eared bat).